A 24-amino-acid chain; its full sequence is U1-plectoxin-Pt1e (24 aa).

C4 and C18 are joined by a disulfide.

The protein belongs to the neurotoxin 02 (plectoxin) family. 02 (plectoxin) subfamily. Post-translationally, contains 5 disulfide bonds. Expressed by the venom gland.

The protein resides in the secreted. Its function is as follows. Potent toxin that may paralyze and/or kill insect pests such as H.virescens (lepidoptera), S.exigua (beet armyworm) and M.sexta (tobacco hornworm). This Plectreurys tristis (Spider) protein is U1-plectoxin-Pt1e.